The following is a 447-amino-acid chain: Dihydroorotase (447 aa).

Zn(2+)-binding residues include histidine 81 and histidine 83. Residues 83 to 85 (HFR) and asparagine 115 contribute to the substrate site. Positions 171, 198, and 252 each coordinate Zn(2+). A substrate-binding site is contributed by asparagine 298. Zn(2+) is bound at residue aspartate 325. The active site involves aspartate 325. Substrate-binding positions include histidine 329 and 343–344 (FG).

This sequence belongs to the metallo-dependent hydrolases superfamily. DHOase family. Class I DHOase subfamily. Requires Zn(2+) as cofactor.

The enzyme catalyses (S)-dihydroorotate + H2O = N-carbamoyl-L-aspartate + H(+). It functions in the pathway pyrimidine metabolism; UMP biosynthesis via de novo pathway; (S)-dihydroorotate from bicarbonate: step 3/3. Catalyzes the reversible cyclization of carbamoyl aspartate to dihydroorotate. The polypeptide is Dihydroorotase (Ehrlichia chaffeensis (strain ATCC CRL-10679 / Arkansas)).